Here is a 169-residue protein sequence, read N- to C-terminus: 3-hydroxyacyl-[acyl-carrier-protein] dehydratase FabZ (169 aa).

His-66 is a catalytic residue.

This sequence belongs to the thioester dehydratase family. FabZ subfamily.

It is found in the cytoplasm. It catalyses the reaction a (3R)-hydroxyacyl-[ACP] = a (2E)-enoyl-[ACP] + H2O. Functionally, involved in unsaturated fatty acids biosynthesis. Catalyzes the dehydration of short chain beta-hydroxyacyl-ACPs and long chain saturated and unsaturated beta-hydroxyacyl-ACPs. The polypeptide is 3-hydroxyacyl-[acyl-carrier-protein] dehydratase FabZ (Helicobacter hepaticus (strain ATCC 51449 / 3B1)).